A 403-amino-acid polypeptide reads, in one-letter code: Subtilisin-like protease CPC735_035780 (403 aa).

An N-terminal signal peptide occupies residues 1–19 (MSIMKIATLFFAALSAVEA). Residues 20 to 117 (AKLLTPSDKR…VEPDRRVHLT (98 aa)) constitute a propeptide that is removed on maturation. An Inhibitor I9 domain is found at 35–116 (SYIVVMKDNV…YVEPDRRVHL (82 aa)). Residues 127 to 403 (SWGLGRISHR…NKLLYNNSGR (277 aa)) form the Peptidase S8 domain. Active-site charge relay system residues include Asp-159 and His-190. N-linked (GlcNAc...) asparagine glycosylation is found at Asn-233 and Asn-251. The active-site Charge relay system is the Ser-349. Residue Asn-399 is glycosylated (N-linked (GlcNAc...) asparagine).

This sequence belongs to the peptidase S8 family.

The protein resides in the secreted. Secreted subtilisin-like serine protease with keratinolytic activity that contributes to pathogenicity. The polypeptide is Subtilisin-like protease CPC735_035780 (Coccidioides posadasii (strain C735) (Valley fever fungus)).